Reading from the N-terminus, the 89-residue chain is uncharacterized protein (89 aa).

3 consecutive transmembrane segments (helical) span residues 9–29, 35–55, and 65–85; these read ICNFLFQFSLEFFSISSLHSI, ISLSLSLFFLVAILYNIYIYL, and ILFAIPPLCPLCSPCFFFGTS.

The protein localises to the membrane. This is an uncharacterized protein from Schizosaccharomyces pombe (strain 972 / ATCC 24843) (Fission yeast).